The sequence spans 76 residues: Peptide ARACIN 1 (76 aa).

An N-terminal signal peptide occupies residues 1–22; the sequence is MAMKTSHVLLLCLMFVIGFVEA. The propeptide at 23–35 is removed in mature form; it reads RRSDTGPDISTPP. A SxS motif essential for MIK2 binding motif is present at residues 36 to 38; it reads SGS. The SCOOP motif motif lies at 36–49; sequence SGSCGASIAEFNSS. Residues 56–76 form a disordered region; the sequence is APPCRRPRLQNSEDVTHTTLP. A compositionally biased stretch (polar residues) spans 64–76; that stretch reads LQNSEDVTHTTLP.

It belongs to the serine rich endogenous peptide (SCOOP) phytocytokine family. Interacts with MIK2 (via extracellular leucine-rich repeat domain); this interaction triggers the formation of complex between MIK2 and the BAK1/SERK3 and SERK4 coreceptors, and subsequent BAK1 activation by phosphorylation. In terms of tissue distribution, mainly expressed in young developing leaves, hydathodes, immature flowers and elongating pollen tubes.

It localises to the cell membrane. The protein resides in the secreted. Its subcellular location is the extracellular space. It is found in the apoplast. The protein localises to the endoplasmic reticulum. Functionally, brassicaceae-specific phytocytokine (plant endogenous peptide released into the apoplast) perceived by MIK2 in a BAK1/SERK3 and SERK4 coreceptors-dependent manner, that modulates various physiological and antimicrobial processes including growth prevention and reactive oxygen species (ROS) response regulation. Inhibits the fungal growth of Alternaria brassicicola, Sclerotinia sclerotiorum, Fusarium graminearum, yeast (Saccharomyces) and Botrytis cinerea, thus being an antimicrobial peptide (AMP). Promotes resistance to A.brassicicola and B.cinerea. This is Peptide ARACIN 1 from Arabidopsis thaliana (Mouse-ear cress).